Reading from the N-terminus, the 89-residue chain is Elongation factor 1-beta (89 aa).

It belongs to the EF-1-beta/EF-1-delta family.

Functionally, promotes the exchange of GDP for GTP in EF-1-alpha/GDP, thus allowing the regeneration of EF-1-alpha/GTP that could then be used to form the ternary complex EF-1-alpha/GTP/AAtRNA. The sequence is that of Elongation factor 1-beta (ef1b) from Methanocaldococcus jannaschii (strain ATCC 43067 / DSM 2661 / JAL-1 / JCM 10045 / NBRC 100440) (Methanococcus jannaschii).